A 325-amino-acid chain; its full sequence is Phenylalanine--tRNA ligase alpha subunit (325 aa).

Glu-251 contributes to the Mg(2+) binding site.

The protein belongs to the class-II aminoacyl-tRNA synthetase family. Phe-tRNA synthetase alpha subunit type 1 subfamily. Tetramer of two alpha and two beta subunits. Mg(2+) is required as a cofactor.

It localises to the cytoplasm. The enzyme catalyses tRNA(Phe) + L-phenylalanine + ATP = L-phenylalanyl-tRNA(Phe) + AMP + diphosphate + H(+). The sequence is that of Phenylalanine--tRNA ligase alpha subunit from Thermotoga neapolitana (strain ATCC 49049 / DSM 4359 / NBRC 107923 / NS-E).